The sequence spans 286 residues: MDGVKCQFVNTNGITLHVAAAGREDGPLIVLLHGFPEFWYGWKNQIKPLVDAGYRVIAPDQRGYNLSDKPEGIDSYRIDTLRDDIIGLITQFTDEKAIVIGHDWGGAVAWHLASTRPEYLEKLIAINIPHPHVMKTVTPLYPPQWLKSSYIAYFQLPDIPEASLRENDYDTLDKAIGLSDRPALFTSEDVSRYKEAWKQPGALTAMLNWYRALRKGSLAEKPSYETVPYRMIWGMEDRFLSRKLAKETERHCPNGHLIFVDEASHWINHEKPAIVNQLILEYLKNQ.

Positions 27 to 272 (PLIVLLHGFP…ASHWINHEKP (246 aa)) constitute an AB hydrolase-1 domain. Residue Asp-103 is the Nucleophile of the active site. Tyr-210 acts as the Proton donor in catalysis. The active-site Proton acceptor is the His-265.

This sequence belongs to the AB hydrolase superfamily. Epoxide hydrolase family.

The protein is AB hydrolase superfamily protein YfhM (yfhM) of Bacillus subtilis (strain 168).